We begin with the raw amino-acid sequence, 511 residues long: Coatomer subunit delta (511 aa).

Residues Gln167–Gly177 are compositionally biased toward basic and acidic residues. Residues Gln167–Ser188 are disordered. Ser223 carries the phosphoserine modification. An N6-acetyllysine mark is found at Lys233 and Lys241. Ser244 bears the Phosphoserine mark. An MHD domain is found at Met271–Leu511. An N6-acetyllysine mark is found at Lys309 and Lys351. Ser493 is modified (phosphoserine).

It belongs to the adaptor complexes medium subunit family. Delta-COP subfamily. As to quaternary structure, oligomeric complex that consists of at least the alpha, beta, beta', gamma, delta, epsilon and zeta subunits.

It localises to the cytoplasm. The protein localises to the golgi apparatus membrane. It is found in the cytoplasmic vesicle. Its subcellular location is the COPI-coated vesicle membrane. The coatomer is a cytosolic protein complex that binds to dilysine motifs and reversibly associates with Golgi non-clathrin-coated vesicles, which further mediate biosynthetic protein transport from the ER, via the Golgi up to the trans Golgi network. Coatomer complex is required for budding from Golgi membranes, and is essential for the retrograde Golgi-to-ER transport of dilysine-tagged proteins. In mammals, the coatomer can only be recruited by membranes associated to ADP-ribosylation factors (ARFs), which are small GTP-binding proteins; the complex also influences the Golgi structural integrity, as well as the processing, activity, and endocytic recycling of LDL receptors. This is Coatomer subunit delta (ARCN1) from Pongo abelii (Sumatran orangutan).